We begin with the raw amino-acid sequence, 616 residues long: Probable Xaa-Pro aminopeptidase P (616 aa).

Mn(2+) is bound by residues Asp-413, Asp-424, Glu-522, and Glu-536.

The protein belongs to the peptidase M24B family. It depends on Mn(2+) as a cofactor.

It carries out the reaction Release of any N-terminal amino acid, including proline, that is linked to proline, even from a dipeptide or tripeptide.. Catalyzes the removal of a penultimate prolyl residue from the N-termini of peptides. The sequence is that of Probable Xaa-Pro aminopeptidase P (AMPP) from Paracoccidioides brasiliensis (strain Pb18).